Consider the following 1068-residue polypeptide: Protein AF-10 (1068 aa).

The PHD-type 1 zinc finger occupies 22–74 (IGGCCVCSDERGWAENPLVYCDGHGCSVAVHQACYGIVQVPTGPWFCRKCESQ). The segment at 79-112 (RVRCELCPHKDGALKRTDNGGWAHVVCALYIPEV) adopts a C2HC pre-PHD-type zinc-finger fold. Residues 80-287 (VRCELCPHKD…SLKRLEDTTA (208 aa)) form a self-association region. The interval 106 to 190 (ALYIPEVQFA…EGNGADNVQY (85 aa)) is required for interaction with histone H3. The PHD-type 2 zinc finger occupies 135-198 (KTCYICDEQG…QYCGYCKYHF (64 aa)). The segment at 141 to 233 (DEQGRESKAA…QDKHHEKEKK (93 aa)) is interaction with FSTL3. The tract at residues 206 to 260 (RGSNRSYDQSLSDSSSHSQDKHHEKEKKKYKEKDKHKQKHKKQPEPSPALVPSLT) is disordered. Positions 211–222 (SYDQSLSDSSSH) are enriched in low complexity. Ser-217 carries the phosphoserine modification. Residues 223–240 (SQDKHHEKEKKKYKEKDK) show a composition bias toward basic and acidic residues. Ser-252 is modified (phosphoserine). Residue Lys-280 forms a Glycyl lysine isopeptide (Lys-Gly) (interchain with G-Cter in SUMO2) linkage. The segment covering 291-305 (NANFQEVSAHTSSGK) has biased composition (polar residues). Residues 291 to 505 (NANFQEVSAH…SSASPTSSVA (215 aa)) form a disordered region. Residues 306 to 317 (DVSETRGSEGKG) are compositionally biased toward basic and acidic residues. A DNA-binding region spans residues 311–674 (RGSEGKGKKS…QDLGDNSRNL (364 aa)). Residues 352-372 (SFSGTPGSVKSSSGSSVQSPQ) show a composition bias toward low complexity. Polar residues-rich tracts occupy residues 387–396 (YSHSQQSSAT) and 404–446 (SGSQ…SSLP). A Phosphoserine modification is found at Ser-436. Positions 465-483 (EKKRKGNKQSKHGPGRPKG) are enriched in basic residues. Low complexity predominate over residues 490–505 (VSHLSVSSASPTSSVA). Ser-532 bears the Phosphoserine mark. Positions 583–594 (SGSGSSTPVSSS) are enriched in low complexity. 2 disordered regions span residues 583–612 (SGSG…ALSP) and 660–708 (NNQT…SLEN). Polar residues-rich tracts occupy residues 595–604 (HLPQQSSGHL) and 660–673 (NNQT…NSRN). Residues 674–694 (LVGRGSSPRGSLSPRSPVSSL) are compositionally biased toward low complexity. A phosphoserine mark is found at Ser-684, Ser-686, and Ser-689. Residues 703–784 (NSSLENLPPV…NAQLSVPFPT (82 aa)) are transactivation domain; required for DOT1L-binding. Residues 750–778 (LQVENRRLEEQIKNLTAKKERLQLLNAQL) form a leucine-zipper region. The segment covering 800-814 (AQTAPTTDSLNSSKS) has biased composition (polar residues). A disordered region spans residues 800–865 (AQTAPTTDSL…SPAQQGSGVS (66 aa)). 2 stretches are compositionally biased toward low complexity: residues 834 to 848 (LTSS…SALS) and 855 to 865 (QSPAQQGSGVS).

In terms of assembly, self-associates. Interacts with FSTL3 isoform 2; the interaction enhances MLLT10 in vitro transcriptional activity and self-association. Interacts with YEATS4. Interacts with SS18. Interacts with DOT1L; this interaction also occurs with the KMT2A/MLL1 fusion protein. Interacts with histone H3; interaction is necessary for MLLT10 binding to nucleosomes; interaction is inhibited by histone H3 'Lys-27' methylations (H3K27me1, H3K27me2 and H3K27me3) amd acetylation; interaction stabilizes association of MLLT10 at chromatin; interaction is essential for histone H3 'Lys-79' dimethylation (H3K79me2). As to expression, expressed abundantly in testis.

The protein resides in the nucleus. Probably involved in transcriptional regulation. In vitro or as fusion protein with KMT2A/MLL1 has transactivation activity. Binds to cruciform DNA. In cells, binding to unmodified histone H3 regulates DOT1L functions including histone H3 'Lys-79' dimethylation (H3K79me2) and gene activation. The sequence is that of Protein AF-10 from Homo sapiens (Human).